The chain runs to 432 residues: Glutamyl-tRNA reductase (432 aa).

Substrate is bound by residues 55–58 (TCNR), S114, 119–121 (ETQ), and Q125. C56 (nucleophile) is an active-site residue. 194-199 (GAGEMI) contributes to the NADP(+) binding site.

Belongs to the glutamyl-tRNA reductase family. In terms of assembly, homodimer.

The catalysed reaction is (S)-4-amino-5-oxopentanoate + tRNA(Glu) + NADP(+) = L-glutamyl-tRNA(Glu) + NADPH + H(+). It participates in porphyrin-containing compound metabolism; protoporphyrin-IX biosynthesis; 5-aminolevulinate from L-glutamyl-tRNA(Glu): step 1/2. Its function is as follows. Catalyzes the NADPH-dependent reduction of glutamyl-tRNA(Glu) to glutamate 1-semialdehyde (GSA). This is Glutamyl-tRNA reductase from Burkholderia ambifaria (strain ATCC BAA-244 / DSM 16087 / CCUG 44356 / LMG 19182 / AMMD) (Burkholderia cepacia (strain AMMD)).